Reading from the N-terminus, the 175-residue chain is ATP synthase subunit delta (175 aa).

Belongs to the ATPase delta chain family. In terms of assembly, F-type ATPases have 2 components, F(1) - the catalytic core - and F(0) - the membrane proton channel. F(1) has five subunits: alpha(3), beta(3), gamma(1), delta(1), epsilon(1). F(0) has three main subunits: a(1), b(2) and c(10-14). The alpha and beta chains form an alternating ring which encloses part of the gamma chain. F(1) is attached to F(0) by a central stalk formed by the gamma and epsilon chains, while a peripheral stalk is formed by the delta and b chains.

The protein localises to the cell membrane. In terms of biological role, f(1)F(0) ATP synthase produces ATP from ADP in the presence of a proton or sodium gradient. F-type ATPases consist of two structural domains, F(1) containing the extramembraneous catalytic core and F(0) containing the membrane proton channel, linked together by a central stalk and a peripheral stalk. During catalysis, ATP synthesis in the catalytic domain of F(1) is coupled via a rotary mechanism of the central stalk subunits to proton translocation. Functionally, this protein is part of the stalk that links CF(0) to CF(1). It either transmits conformational changes from CF(0) to CF(1) or is implicated in proton conduction. The sequence is that of ATP synthase subunit delta from Ruminiclostridium cellulolyticum (strain ATCC 35319 / DSM 5812 / JCM 6584 / H10) (Clostridium cellulolyticum).